A 101-amino-acid chain; its full sequence is Small ribosomal subunit protein uS14 (101 aa).

It belongs to the universal ribosomal protein uS14 family. In terms of assembly, part of the 30S ribosomal subunit. Contacts proteins S3 and S10.

In terms of biological role, binds 16S rRNA, required for the assembly of 30S particles and may also be responsible for determining the conformation of the 16S rRNA at the A site. The protein is Small ribosomal subunit protein uS14 of Beijerinckia indica subsp. indica (strain ATCC 9039 / DSM 1715 / NCIMB 8712).